Consider the following 299-residue polypeptide: MDLLWILPSLWLLLLGGPACLKTQEHPSCPGPRELEASKVVLLPSCPGAPGSPGEKGAPGPQGPPGPPGKMGPKGEPGDPVNLLRCQEGPRNCRELLSQGATLSGWYHLCLPEGRALPVFCDMDTEGGGWLVFQRRQDGSVDFFRSWSSYRAGFGNQESEFWLGNENLHQLTLQGNWELRVELEDFNGNRTFAHYATFRLLGEVDHYQLALGKFSEGTAGDSLSLHSGRPFTTYDADHDSSNSNCAVIVHGAWWYASCYRSNLNGRYAVSEAAAHKYGIDWASGRGVGHPYRRVRMMLR.

The signal sequence occupies residues 1–23 (MDLLWILPSLWLLLLGGPACLKT). The segment at 44-81 (PSCPGAPGSPGEKGAPGPQGPPGPPGKMGPKGEPGDPV) is disordered. A Collagen-like domain is found at 48 to 80 (GAPGSPGEKGAPGPQGPPGPPGKMGPKGEPGDP). Hydroxyproline occurs at positions 50, 53, 59, 65, 68, and 77. Positions 61–70 (PQGPPGPPGK) are enriched in pro residues. The Fibrinogen C-terminal domain maps to 84–299 (LRCQEGPRNC…PYRRVRMMLR (216 aa)). 2 disulfides stabilise this stretch: C86–C110 and C93–C121. N-linked (GlcNAc...) (complex) asparagine glycosylation is present at N189. Ca(2+) is bound by residues D237, D239, S241, and S243. The cysteines at positions 245 and 258 are disulfide-linked. 258–259 (CY) contributes to the a carbohydrate binding site.

This sequence belongs to the ficolin lectin family. As to quaternary structure, homotrimer. May form an octadecamer consisting of an elementary trimer unit. Does not interact with fibronectin, elastin or zymosan. Interacts with MASP1 and MASP2. The N-terminus is blocked. Liver and lung. In liver it is produced by bile duct epithelial cells and hepatocytes. In lung it is produced by both ciliated bronchial epithelial cells and type II alveolar epithelial cells.

It localises to the secreted. May function in innate immunity through activation of the lectin complement pathway. Calcium-dependent and GlcNAc-binding lectin. Has affinity with GalNAc, GlcNAc, D-fucose, as mono/oligosaccharide and lipopolysaccharides from S.typhimurium and S.minnesota. In Homo sapiens (Human), this protein is Ficolin-3 (FCN3).